Here is an 810-residue protein sequence, read N- to C-terminus: MEECLLHGRLHATIYEVDHLHAEGGRSGFLGSILANVEETIGVGKGETQLYATIDLEKARVGRTRKITKEPKNPKWFESFHIYCGHMAKHVIFTVKDANPIGATLIGRGYIPVEDILHGEEVDRWVDILDNEKNPIAGGSKIHVKLQYFGVEKDKNWNRGIKSAKFPGVPYTFFSQRRGCKVSLYQDAHIPGNFVPKIPLAGGKNYEPHRCWEDIFDAITNAKHLIYITGWSVYTEISLVRDSRRPKQGGDVTVGELLKKKASEGVKVILLVWDDRTSVDLLKKDGLMATHDEETENFFRGTDVNCILCPRNPDDGGSIVQNLQISTMFTHHQKIVVVDSEMPSGGSRSRRIVSFVGGLDLCDGRYDTPFHSLFRTLDTAHHDDFHQPNFTGAAITKGGPREPWHDIHCRLEGPIAWDVLYNFEQRWSRQGGKDILVKMRELGDIIIPPSPVLFSEDHDVWNVQLFRSIDGGAAAGFPDSPEAAAEAGLVSGKDNIIDRSIQDAYIHAIRRAKDFIYIENQYFLGSSFAWSADGIKPEEINALHLIPKELSLKIVSKIKAGEKFKVYVVVPMWPEGIPESGSVQAILDWQKRTMEMMYKDVIKALRENGLEGEDPRDYLTFFCLGNREVKKDGEYEPSEKPEPDTDYIRAQEARRFMIYVHTKMMIVDDEYIIIGSANINQRSMDGARDSEIAMGGYQPYHLSTRQPARGQIHGFRMSLWYEHLGMLDETFLDPSSQECIQKVNRVADKYWDLYSSESLEHDLPGHLLRYPIGIASEGNITELPGCEFFPDTKARILGVKSDYMPPILTT.

The 126-residue stretch at 1–126 folds into the C2 domain; the sequence is MEECLLHGRL…LHGEEVDRWV (126 aa). Ca(2+) is bound at residue Asp-187. Residues 327-365 form the PLD phosphodiesterase 1 domain; that stretch reads TMFTHHQKIVVVDSEMPSGGSRSRRIVSFVGGLDLCDGR. Residues His-332, Lys-334, and Asp-339 contribute to the active site. Position 332 (His-332) interacts with a 1,2-diacyl-sn-glycero-3-phosphate. 2 residues coordinate Ca(2+): His-371 and His-405. The a 1,2-diacyl-sn-glycero-3-phosphate site is built by Gln-521 and His-661. The PLD phosphodiesterase 2 domain occupies 656 to 683; that stretch reads FMIYVHTKMMIVDDEYIIIGSANINQRS. Residues His-661, Lys-663, and Asp-668 contribute to the active site. Glu-722 contributes to the Ca(2+) binding site.

It belongs to the phospholipase D family. C2-PLD subfamily. Ca(2+) is required as a cofactor. Highly expressed in roots, stems and flowers, moderately in leaves, seedlings and siliques. Not detected in dry seeds.

The protein localises to the cytoplasm. It localises to the membrane. It is found in the vacuole. The protein resides in the cytoplasmic vesicle. Its subcellular location is the clathrin-coated vesicle. The catalysed reaction is a 1,2-diacyl-sn-glycero-3-phosphocholine + H2O = a 1,2-diacyl-sn-glycero-3-phosphate + choline + H(+). Its function is as follows. Hydrolyzes glycerol-phospholipids at the terminal phosphodiesteric bond to generate phosphatidic acids (PA). Plays an important role in various cellular processes, including phytohormone action and response to stress, characterized by acidification of the cell. The protein is Phospholipase D alpha 2 of Arabidopsis thaliana (Mouse-ear cress).